Consider the following 351-residue polypeptide: Fe(3+) ions import ATP-binding protein FbpC (351 aa).

The ABC transporter domain maps to 7–237 (VVLKNVCKRF…PSSMFMANFM (231 aa)). An ATP-binding site is contributed by 39–46 (GPSGCGKT).

The protein belongs to the ABC transporter superfamily. Fe(3+) ion importer (TC 3.A.1.10) family. As to quaternary structure, the complex is composed of two ATP-binding proteins (FbpC), two transmembrane proteins (FbpB) and a solute-binding protein (FbpA).

It is found in the cell inner membrane. The enzyme catalyses Fe(3+)(out) + ATP + H2O = Fe(3+)(in) + ADP + phosphate + H(+). Its function is as follows. Part of the ABC transporter complex FbpABC involved in Fe(3+) ions import. Responsible for energy coupling to the transport system. In Photobacterium profundum (strain SS9), this protein is Fe(3+) ions import ATP-binding protein FbpC.